Consider the following 555-residue polypeptide: Dihydroxy-acid dehydratase (555 aa).

Cys46 lines the [2Fe-2S] cluster pocket. Asp78 serves as a coordination point for Mg(2+). Residue Cys119 participates in [2Fe-2S] cluster binding. Residues Asp120 and Lys121 each contribute to the Mg(2+) site. At Lys121 the chain carries N6-carboxylysine. Cys191 serves as a coordination point for [2Fe-2S] cluster. Residue Glu442 participates in Mg(2+) binding. The active-site Proton acceptor is Ser468.

The protein belongs to the IlvD/Edd family. In terms of assembly, homodimer. The cofactor is [2Fe-2S] cluster. Mg(2+) serves as cofactor.

The catalysed reaction is (2R)-2,3-dihydroxy-3-methylbutanoate = 3-methyl-2-oxobutanoate + H2O. It carries out the reaction (2R,3R)-2,3-dihydroxy-3-methylpentanoate = (S)-3-methyl-2-oxopentanoate + H2O. It functions in the pathway amino-acid biosynthesis; L-isoleucine biosynthesis; L-isoleucine from 2-oxobutanoate: step 3/4. It participates in amino-acid biosynthesis; L-valine biosynthesis; L-valine from pyruvate: step 3/4. Functionally, functions in the biosynthesis of branched-chain amino acids. Catalyzes the dehydration of (2R,3R)-2,3-dihydroxy-3-methylpentanoate (2,3-dihydroxy-3-methylvalerate) into 2-oxo-3-methylpentanoate (2-oxo-3-methylvalerate) and of (2R)-2,3-dihydroxy-3-methylbutanoate (2,3-dihydroxyisovalerate) into 2-oxo-3-methylbutanoate (2-oxoisovalerate), the penultimate precursor to L-isoleucine and L-valine, respectively. This is Dihydroxy-acid dehydratase from Thermus thermophilus (strain ATCC 27634 / DSM 579 / HB8).